The chain runs to 403 residues: Tyrosine--tRNA ligase (403 aa).

The 'HIGH' region motif lies at 46–55 (PTAPDLHLGH). The short motif at 230 to 234 (KMSKS) is the 'KMSKS' region element. K233 contacts ATP. One can recognise an S4 RNA-binding domain in the interval 342–402 (LFITQILNQA…GKKAYAKVTV (61 aa)).

It belongs to the class-I aminoacyl-tRNA synthetase family. TyrS type 2 subfamily. In terms of assembly, homodimer.

It localises to the cytoplasm. It catalyses the reaction tRNA(Tyr) + L-tyrosine + ATP = L-tyrosyl-tRNA(Tyr) + AMP + diphosphate + H(+). Catalyzes the attachment of tyrosine to tRNA(Tyr) in a two-step reaction: tyrosine is first activated by ATP to form Tyr-AMP and then transferred to the acceptor end of tRNA(Tyr). In Psychrobacter arcticus (strain DSM 17307 / VKM B-2377 / 273-4), this protein is Tyrosine--tRNA ligase.